The sequence spans 178 residues: Caveolin-1 (178 aa).

At Ser-2 the chain carries N-acetylserine. A Phosphoserine modification is found at Ser-2. A required for homooligomerization region spans residues 2-94 (SGGKYVDSEG…WKASFTTFTV (93 aa)). The Cytoplasmic portion of the chain corresponds to 2–104 (SGGKYVDSEG…TKYWFYRLLS (103 aa)). N6-acetyllysine; alternate is present on Lys-5. Lys-5 participates in a covalent cross-link: Glycyl lysine isopeptide (Lys-Gly) (interchain with G-Cter in ubiquitin); alternate. Residue Tyr-6 is modified to Phosphotyrosine. Residue Ser-9 is modified to Phosphoserine. Tyr-14 bears the Phosphotyrosine; by ABL1 mark. Tyr-25 is modified (phosphotyrosine). Glycyl lysine isopeptide (Lys-Gly) (interchain with G-Cter in ubiquitin) cross-links involve residues Lys-26, Lys-30, Lys-39, Lys-47, and Lys-57. An interaction with CAVIN3 region spans residues 82–94 (DGIWKASFTTFTV). Positions 105-125 (ALFGIPMALIWGIYFAILSFL) form an intramembrane region, helical. The Cytoplasmic segment spans residues 126 to 178 (HIWAVVPCIKSFLIEIQCISRVYSIYVHTFCDPFFEAVGKIFSNIRINMQKEI). The tract at residues 131–142 (VPCIKSFLIEIQ) is interacts with SPRY1, SPRY2, SPRY3 and SPRY4. Residues Cys-133, Cys-143, and Cys-156 are each lipidated (S-palmitoyl cysteine). Residues 149–160 (SIYVHTFCDPFF) are interacts with SPRY1, SPRY2, and SPRY4. Residues 167 to 178 (FSNIRINMQKEI) form an interacts with SPRY1, SPRY2, SPRY3 and SPRY4 region.

The protein belongs to the caveolin family. Homooligomer. Interacts with GLIPR2. Interacts with NOSTRIN. Interacts with SNAP25 and STX1A. Interacts (via the N-terminus) with DPP4; the interaction is direct. Interacts with CTNNB1, CDH1 and JUP. Interacts with PACSIN2; this interaction induces membrane tubulation. Interacts with SLC7A9. Interacts with BMX and BTK. Interacts with TGFBR1. Interacts with CAVIN3 (via leucine-zipper domain) in a cholesterol-sensitive manner. Interacts with CAVIN1. Interacts with EHD2 in a cholesterol-dependent manner. Forms a ternary complex with UBXN6 and VCP; mediates CAV1 targeting to lysosomes for degradation. Interacts with ABCG1; this interaction regulates ABCG1-mediated cholesterol efflux. Interacts with NEU3; this interaction enhances NEU3 sialidase activity within caveola. Interacts (via C-terminus) with SPRY1, SPRY2 (via C-terminus), SPRY3, and SPRY4. Interacts with IGFBP5; this interaction allows trafficking of IGFBP5 from the plasma membrane to the nucleus. Post-translationally, phosphorylated at Tyr-14 by ABL1 in response to oxidative stress. Ubiquitinated. Undergo monoubiquitination and multi- and/or polyubiquitination. Monoubiquitination of N-terminal lysines promotes integration in a ternary complex with UBXN6 and VCP which promotes oligomeric CAV1 targeting to lysosomes for degradation. Ubiquitinated by ZNRF1; leading to degradation and modulation of the TLR4-mediated immune response.

It localises to the golgi apparatus membrane. The protein resides in the cell membrane. It is found in the membrane. Its subcellular location is the caveola. The protein localises to the membrane raft. Functionally, may act as a scaffolding protein within caveolar membranes. Forms a stable heterooligomeric complex with CAV2 that targets to lipid rafts and drives caveolae formation. Mediates the recruitment of CAVIN proteins (CAVIN1/2/3/4) to the caveolae. Interacts directly with G-protein alpha subunits and can functionally regulate their activity. Involved in the costimulatory signal essential for T-cell receptor (TCR)-mediated T-cell activation. Its binding to DPP4 induces T-cell proliferation and NF-kappa-B activation in a T-cell receptor/CD3-dependent manner. Recruits CTNNB1 to caveolar membranes and may regulate CTNNB1-mediated signaling through the Wnt pathway. Negatively regulates TGFB1-mediated activation of SMAD2/3 by mediating the internalization of TGFBR1 from membrane rafts leading to its subsequent degradation. Binds 20(S)-hydroxycholesterol (20(S)-OHC). This chain is Caveolin-1 (CAV1), found in Felis catus (Cat).